The primary structure comprises 727 residues: NADH-ubiquinone oxidoreductase 75 kDa subunit, mitochondrial (727 aa).

Residues 1–23 constitute a mitochondrion transit peptide; the sequence is MLRIPIKRALIGLSNSPKGYVRT. Residues 30 to 108 enclose the 2Fe-2S ferredoxin-type domain; the sequence is NLIEVFVDGQ…GWNILTNSEK (79 aa). Cys64, Cys75, and Cys78 together coordinate [2Fe-2S] cluster. Lys84 is subject to N6-acetyllysine. Cys92 contributes to the [2Fe-2S] cluster binding site. The region spanning 108–147 is the 4Fe-4S His(Cys)3-ligated-type domain; that stretch reads KSKKAREGVMEFLLANHPLDCPICDQGGECDLQDQSMMFG. [4Fe-4S] cluster is bound by residues His124, Cys128, Cys131, Cys137, Cys176, Cys179, Cys182, and Cys226. Positions 245–301 constitute a 4Fe-4S Mo/W bis-MGD-type domain; that stretch reads TRKTESIDVMDAVGSNIVVSTRTGEVMRILPRMHEDINEEWISDKTRFAYDGLKRQR. Ser461 carries the phosphoserine modification. 3 positions are modified to N6-acetyllysine: Lys467, Lys499, and Lys709.

This sequence belongs to the complex I 75 kDa subunit family. In terms of assembly, core subunit of respiratory chain NADH dehydrogenase (Complex I) which is composed of 45 different subunits. This is the largest subunit of complex I and it is a component of the iron-sulfur (IP) fragment of the enzyme. Complex I associates with ubiquinol-cytochrome reductase complex (Complex III) to form supercomplexes. In astrocytes, less complex I is assembled into supercomplexes as compared to neurons. Interacts with MDM2. Interacts with AKAP1. It depends on [2Fe-2S] cluster as a cofactor. Requires [4Fe-4S] cluster as cofactor. In terms of processing, acetylation of Lys-84 is observed in liver mitochondria from fasted mice but not from fed mice. In terms of tissue distribution, brain. More abundant in neurons than in astrocytes (at protein level).

Its subcellular location is the mitochondrion inner membrane. The catalysed reaction is a ubiquinone + NADH + 5 H(+)(in) = a ubiquinol + NAD(+) + 4 H(+)(out). Functionally, core subunit of the mitochondrial membrane respiratory chain NADH dehydrogenase (Complex I) which catalyzes electron transfer from NADH through the respiratory chain, using ubiquinone as an electron acceptor. Essential for catalysing the entry and efficient transfer of electrons within complex I. Plays a key role in the assembly and stability of complex I and participates in the association of complex I with ubiquinol-cytochrome reductase complex (Complex III) to form supercomplexes. The chain is NADH-ubiquinone oxidoreductase 75 kDa subunit, mitochondrial (Ndufs1) from Mus musculus (Mouse).